The following is a 1076-amino-acid chain: Serine/threonine-protein phosphatase 6 regulatory ankyrin repeat subunit C (1076 aa).

28 ANK repeats span residues 7 to 36 (TDQP…NINV), 40 to 69 (ERRT…NVNA), 73 to 102 (LWLT…DVNA), 106 to 135 (LWQT…SLNV), 139 to 168 (SGRS…SLNV), 172 to 201 (KERQ…DLGC), 205 to 234 (KGYG…EIDE), 238 to 267 (FGNT…NVNQ), 271 to 301 (KGFT…DVNY), 305 to 334 (EGKS…EIDC), 338 to 367 (FGNT…DTAR), 371 to 400 (HDMF…LYSI), 422 to 451 (LGRT…DLRR), 455 to 484 (FGRT…GVNE), 488 to 545 (KGCS…DPSL), 549 to 579 (QGYT…CLED), 584 to 613 (IPVS…NLDV), 617 to 646 (KGRT…SALI), 651 to 680 (RKWT…RADI), 687 to 716 (YGQT…TADA), 720 to 749 (RGRT…FVLC), 753 to 782 (KGRT…STDP), 790 to 819 (SGYS…FSYL), 822 to 852 (NPFT…KIVN), 857 to 886 (KGRT…EVNA), 890 to 920 (TGRT…DLTV), 924 to 953 (NKNT…DLGL), and 960 to 989 (ALQM…TVLA). Over residues 502–514 (YRRAEPHTPSSHD) the composition is skewed to basic and acidic residues. Residues 502–522 (YRRAEPHTPSSHDAEEDEPLK) form a disordered region. Residues S1028 and S1075 each carry the phosphoserine modification.

As to quaternary structure, protein phosphatase 6 (PP6) holoenzyme is proposed to be a heterotrimeric complex formed by the catalytic subunit, a SAPS domain-containing subunit (PP6R) and an ankyrin repeat-domain containing regulatory subunit (ARS). Interacts with PPP6R1.

In terms of biological role, putative regulatory subunit of protein phosphatase 6 (PP6) that may be involved in the recognition of phosphoprotein substrates. In Homo sapiens (Human), this protein is Serine/threonine-protein phosphatase 6 regulatory ankyrin repeat subunit C (ANKRD52).